The following is a 151-amino-acid chain: Probable cGMP 3',5'-cyclic phosphodiesterase subunit delta (151 aa).

The protein belongs to the PDE6D/unc-119 family. In terms of assembly, interacts with Pde6.

Its subcellular location is the nucleus. It localises to the cytoplasm. The polypeptide is Probable cGMP 3',5'-cyclic phosphodiesterase subunit delta (Drosophila virilis (Fruit fly)).